Here is a 510-residue protein sequence, read N- to C-terminus: 2,3-bisphosphoglycerate-independent phosphoglycerate mutase (510 aa).

Mn(2+) is bound by residues Asp11 and Ser61. Ser61 serves as the catalytic Phosphoserine intermediate. Substrate contacts are provided by residues His124, 154–155 (RD), Arg185, Arg191, 260–263 (RPDR), and Lys333. Mn(2+) is bound by residues Asp398, His402, Asp439, His440, and His457.

Belongs to the BPG-independent phosphoglycerate mutase family. In terms of assembly, monomer. Mn(2+) is required as a cofactor.

It carries out the reaction (2R)-2-phosphoglycerate = (2R)-3-phosphoglycerate. Its pathway is carbohydrate degradation; glycolysis; pyruvate from D-glyceraldehyde 3-phosphate: step 3/5. In terms of biological role, catalyzes the interconversion of 2-phosphoglycerate and 3-phosphoglycerate. In Mycoplasma mobile (strain ATCC 43663 / 163K / NCTC 11711) (Mesomycoplasma mobile), this protein is 2,3-bisphosphoglycerate-independent phosphoglycerate mutase.